A 217-amino-acid polypeptide reads, in one-letter code: T-complex protein 10A homolog 1 (217 aa).

The tract at residues 1 to 26 is disordered; it reads MLAGQLEARDPKEGTHPEDPCPGAGA. Over residues 7–19 the composition is skewed to basic and acidic residues; sequence EARDPKEGTHPED. A coiled-coil region spans residues 69–110; the sequence is ADVHGKLRSHIDALREQNMELREKLRALQLQRWKARKKSAAS. Positions 75-96 are leucine-zipper; it reads LRSHIDALREQNMELREKLRAL. The segment covering 175–192 has biased composition (basic and acidic residues); it reads ERISSWKTPPQEKRDKSL. Residues 175–217 are disordered; that stretch reads ERISSWKTPPQEKRDKSLSRRRQDRRATPTGRPTPCAERRGGV.

It belongs to the TCP10 family. Self-associates (via leucine zipper). Interacts (via leucine zipper) with ZIPK/DAPK3 (via leucine zipper). Interacts with MAD4.

Its subcellular location is the nucleus. Functionally, may be involved in transcriptional regulation. Has in vitro transcription inhibition activity. The polypeptide is T-complex protein 10A homolog 1 (TCP10L) (Pan troglodytes (Chimpanzee)).